The chain runs to 213 residues: Thymidylate kinase (213 aa).

Position 10 to 17 (10 to 17 (GIDGCGKT)) interacts with ATP.

Belongs to the thymidylate kinase family.

It carries out the reaction dTMP + ATP = dTDP + ADP. Functionally, phosphorylation of dTMP to form dTDP in both de novo and salvage pathways of dTTP synthesis. The protein is Thymidylate kinase of Synechococcus sp. (strain WH7803).